Consider the following 438-residue polypeptide: UDP-N-acetylmuramoylalanine--D-glutamate ligase (438 aa).

Residue 112–118 participates in ATP binding; the sequence is GSNGKST.

Belongs to the MurCDEF family.

The protein resides in the cytoplasm. It catalyses the reaction UDP-N-acetyl-alpha-D-muramoyl-L-alanine + D-glutamate + ATP = UDP-N-acetyl-alpha-D-muramoyl-L-alanyl-D-glutamate + ADP + phosphate + H(+). It participates in cell wall biogenesis; peptidoglycan biosynthesis. Its function is as follows. Cell wall formation. Catalyzes the addition of glutamate to the nucleotide precursor UDP-N-acetylmuramoyl-L-alanine (UMA). This chain is UDP-N-acetylmuramoylalanine--D-glutamate ligase, found in Yersinia pseudotuberculosis serotype I (strain IP32953).